The chain runs to 347 residues: Nod factor export ATP-binding protein I (347 aa).

Residues 1 to 11 (MGENMEREMLR) show a composition bias toward basic and acidic residues. Residues 1-32 (MGENMEREMLRPKTIAMDQNSASARSNPEREI) are disordered. The segment covering 17-26 (MDQNSASARS) has biased composition (polar residues). In terms of domain architecture, ABC transporter spans 49 to 279 (IDLQAVTMIY…IIGCPVIEVY (231 aa)). 81 to 88 (GPNGAGKS) lines the ATP pocket.

The protein belongs to the ABC transporter superfamily. Lipooligosaccharide exporter (TC 3.A.1.102) family. In terms of assembly, the complex is composed of two ATP-binding proteins (NodI) and two transmembrane proteins (NodJ).

It localises to the cell inner membrane. In terms of biological role, part of the ABC transporter complex NodIJ involved in the export of the nodulation factors (Nod factors), the bacterial signal molecules that induce symbiosis and subsequent nodulation induction. Nod factors are LCO (lipo-chitin oligosaccharide), a modified beta-1,4-linked N-acetylglucosamine oligosaccharide. This subunit is responsible for energy coupling to the transport system. This chain is Nod factor export ATP-binding protein I, found in Neorhizobium galegae (Rhizobium galegae).